The primary structure comprises 376 residues: Phytanoyl-CoA hydroxylase-interacting protein-like (376 aa).

Positions 52-161 (VPHNIKISNI…EIIEFCTADY (110 aa)) constitute a Fibronectin type-III domain.

Belongs to the PHYHIP family.

May play a role in the development of the central system. The chain is Phytanoyl-CoA hydroxylase-interacting protein-like (phyhipl) from Xenopus tropicalis (Western clawed frog).